Here is a 138-residue protein sequence, read N- to C-terminus: Small ribosomal subunit protein uS11c (138 aa).

The interval 1–24 is disordered; that stretch reads MTKPIPRIGSRRNGRIGSRKSGRR. The span at 9–24 shows a compositional bias: basic residues; it reads GSRRNGRIGSRKSGRR.

The protein belongs to the universal ribosomal protein uS11 family. In terms of assembly, part of the 30S ribosomal subunit.

The protein resides in the plastid. It is found in the chloroplast. The protein is Small ribosomal subunit protein uS11c of Liriodendron tulipifera (Tuliptree).